Here is a 466-residue protein sequence, read N- to C-terminus: Adenosylhomocysteinase (466 aa).

Substrate contacts are provided by Thr-57, Asp-132, and Glu-192. 193–195 (TTT) serves as a coordination point for NAD(+). Substrate-binding residues include Lys-222 and Asp-226. Residues Asn-227, 256 to 261 (GYGDVG), Glu-279, Asn-314, 335 to 337 (IGH), and Asn-380 each bind NAD(+).

The protein belongs to the adenosylhomocysteinase family. Requires NAD(+) as cofactor.

The protein localises to the cytoplasm. It carries out the reaction S-adenosyl-L-homocysteine + H2O = L-homocysteine + adenosine. Its pathway is amino-acid biosynthesis; L-homocysteine biosynthesis; L-homocysteine from S-adenosyl-L-homocysteine: step 1/1. May play a key role in the regulation of the intracellular concentration of adenosylhomocysteine. This is Adenosylhomocysteinase from Rhizobium rhizogenes (strain K84 / ATCC BAA-868) (Agrobacterium radiobacter).